A 547-amino-acid chain; its full sequence is TBCC domain-containing protein 1 (547 aa).

The C-CAP/cofactor C-like domain occupies 304–435 (PHTHRMVVMS…LEDHMAHTGL (132 aa)).

Belongs to the TBCC family.

The protein resides in the cytoplasm. It is found in the cytoskeleton. Its subcellular location is the microtubule organizing center. The protein localises to the centrosome. It localises to the spindle pole. May play a role in the regulation of centrosome and Golgi apparatus positioning. This chain is TBCC domain-containing protein 1 (tbccd1), found in Xenopus tropicalis (Western clawed frog).